The sequence spans 467 residues: Megakaryocyte-associated tyrosine-protein kinase (467 aa).

Residues 1–20 are disordered; that stretch reads MPTQRWAPGTQCMTKCENSR. The 63-residue stretch at 7-69 folds into the SH3 domain; sequence APGTQCMTKC…AAAALRQREA (63 aa). One can recognise an SH2 domain in the interval 81-170; it reads WFHGKISGQE…AICTKLVKPK (90 aa). The region spanning 194–443 is the Protein kinase domain; it reads LTLGAQIGEG…IVEKLGRELR (250 aa). ATP is bound by residues 200-208 and lysine 221; that span reads IGEGEFGAV. Catalysis depends on aspartate 311, which acts as the Proton acceptor. Residues 445–467 are disordered; sequence VGVAAPAGGQEAEGSAPTRSQDP.

The protein belongs to the protein kinase superfamily. Tyr protein kinase family. CSK subfamily. Interacts with KIT. In terms of tissue distribution, enriched in lymphoid tissues.

It localises to the cytoplasm. The protein localises to the membrane. It carries out the reaction L-tyrosyl-[protein] + ATP = O-phospho-L-tyrosyl-[protein] + ADP + H(+). In terms of biological role, could play a significant role in the signal transduction of hematopoietic cells. May regulate tyrosine kinase activity of SRC-family members in brain. The chain is Megakaryocyte-associated tyrosine-protein kinase (Matk) from Rattus norvegicus (Rat).